Here is a 73-residue protein sequence, read N- to C-terminus: Translation initiation factor IF-1 (73 aa).

The S1-like domain occupies 1-73 (MAKKEDTLVL…TKARVVYRHR (73 aa)).

Belongs to the IF-1 family. Component of the 30S ribosomal translation pre-initiation complex which assembles on the 30S ribosome in the order IF-2 and IF-3, IF-1 and N-formylmethionyl-tRNA(fMet); mRNA recruitment can occur at any time during PIC assembly.

It is found in the cytoplasm. Functionally, one of the essential components for the initiation of protein synthesis. Stabilizes the binding of IF-2 and IF-3 on the 30S subunit to which N-formylmethionyl-tRNA(fMet) subsequently binds. Helps modulate mRNA selection, yielding the 30S pre-initiation complex (PIC). Upon addition of the 50S ribosomal subunit IF-1, IF-2 and IF-3 are released leaving the mature 70S translation initiation complex. This Chlamydia pneumoniae (Chlamydophila pneumoniae) protein is Translation initiation factor IF-1.